Here is a 482-residue protein sequence, read N- to C-terminus: Retrovirus-related Pol polyprotein from type-1 retrotransposable element R2 (482 aa).

Residues 1-84 (AYADDLILFA…DYFKYLGSRY (84 aa)) enclose the Reverse transcriptase domain. Positions 208-482 (QIPAVEKFYQ…ATGGRGRGDI (275 aa)) are nucleic acid-binding endonuclease.

It catalyses the reaction DNA(n) + a 2'-deoxyribonucleoside 5'-triphosphate = DNA(n+1) + diphosphate. The sequence is that of Retrovirus-related Pol polyprotein from type-1 retrotransposable element R2 from Popillia japonica (Japanese beetle).